A 337-amino-acid polypeptide reads, in one-letter code: Glyceraldehyde-3-phosphate dehydrogenase (337 aa).

NAD(+) contacts are provided by residues 12-13, Asp34, and Lys79; that span reads RI. D-glyceraldehyde 3-phosphate contacts are provided by residues 150–152, Thr181, 210–211, and Arg233; these read SCT and TG. Cys151 (nucleophile) is an active-site residue. Asn315 is an NAD(+) binding site.

Belongs to the glyceraldehyde-3-phosphate dehydrogenase family. As to quaternary structure, homotetramer.

The protein localises to the cytoplasm. It catalyses the reaction D-glyceraldehyde 3-phosphate + phosphate + NAD(+) = (2R)-3-phospho-glyceroyl phosphate + NADH + H(+). It functions in the pathway carbohydrate degradation; glycolysis; pyruvate from D-glyceraldehyde 3-phosphate: step 1/5. The protein is Glyceraldehyde-3-phosphate dehydrogenase (GPD1) of Cochliobolus heterostrophus (Southern corn leaf blight fungus).